The following is a 453-amino-acid chain: MKEKQFWNRILEFAQERLTRSMYDFYAIQAEVIKVEENVATIFLPRSEMEMVWEKQLKDIIVVAGFEIYDAEITPHYIFTKPQDTTSSQVEEATNLTLYDYSPKLVSIPYSDTGLKEKYTFDNFIQGDGNVWAVSAALAVSEDLALTYNPLFIYGGPGLGKTHLLNAIGNEILKNIPNARVKYIPAESFINDFLDHLRLGEMEKFKKTYRSLDLLLIDDIQSLSGKKVATQEEFFNTFNALHDKQKQIVLTSDRSPKHLEGLEERLVTRFSWGLTQTITPPDFETRIAILQSKTEHLGYNFQSDTLEYLAGQFDSNVRDLEGAINDITLIARVKKIKDITIDIAAEAIRARKQDVSQMLVIPIDKIQTEVGNFYGVSIKEMKGSRRLQNIVLARQVAMYLSRELTDNSLPKIGKEFGGKDHTTVIHAHAKIKSLIDQDDNLRLEIESIKKKIK.

Residues 1 to 74 form a domain I, interacts with DnaA modulators region; sequence MKEKQFWNRI…GFEIYDAEIT (74 aa). Residues 74–113 form a domain II region; the sequence is TPHYIFTKPQDTTSSQVEEATNLTLYDYSPKLVSIPYSDT. Positions 114-331 are domain III, AAA+ region; that stretch reads GLKEKYTFDN…GAINDITLIA (218 aa). Residues glycine 158, glycine 160, lysine 161, and threonine 162 each contribute to the ATP site. A domain IV, binds dsDNA region spans residues 332 to 453; sequence RVKKIKDITI…EIESIKKKIK (122 aa).

Belongs to the DnaA family. As to quaternary structure, oligomerizes as a right-handed, spiral filament on DNA at oriC.

The protein localises to the cytoplasm. Functionally, plays an essential role in the initiation and regulation of chromosomal replication. ATP-DnaA binds to the origin of replication (oriC) to initiate formation of the DNA replication initiation complex once per cell cycle. Binds the DnaA box (a 9 base pair repeat at the origin) and separates the double-stranded (ds)DNA. Forms a right-handed helical filament on oriC DNA; dsDNA binds to the exterior of the filament while single-stranded (ss)DNA is stabiized in the filament's interior. The ATP-DnaA-oriC complex binds and stabilizes one strand of the AT-rich DNA unwinding element (DUE), permitting loading of DNA polymerase. After initiation quickly degrades to an ADP-DnaA complex that is not apt for DNA replication. Binds acidic phospholipids. This is Chromosomal replication initiator protein DnaA from Streptococcus pneumoniae (strain P1031).